Reading from the N-terminus, the 531-residue chain is 2,3-bisphosphoglycerate-independent phosphoglycerate mutase (531 aa).

Mn(2+) is bound by residues aspartate 13 and serine 63. The active-site Phosphoserine intermediate is serine 63. Residues histidine 124, 154–155, arginine 187, arginine 193, 261–264, and lysine 342 contribute to the substrate site; these read RD and RPDR. The Mn(2+) site is built by aspartate 420, histidine 424, aspartate 462, histidine 463, and histidine 480.

Belongs to the BPG-independent phosphoglycerate mutase family. In terms of assembly, monomer. Mn(2+) serves as cofactor.

The catalysed reaction is (2R)-2-phosphoglycerate = (2R)-3-phosphoglycerate. Its pathway is carbohydrate degradation; glycolysis; pyruvate from D-glyceraldehyde 3-phosphate: step 3/5. Catalyzes the interconversion of 2-phosphoglycerate and 3-phosphoglycerate. The chain is 2,3-bisphosphoglycerate-independent phosphoglycerate mutase from Mycoplasma mycoides subsp. mycoides SC (strain CCUG 32753 / NCTC 10114 / PG1).